A 166-amino-acid chain; its full sequence is Small ribosomal subunit protein uS5 (166 aa).

The 64-residue stretch at 12–75 (YIEKLVQVNR…EAARRNMIQV (64 aa)) folds into the S5 DRBM domain.

It belongs to the universal ribosomal protein uS5 family. As to quaternary structure, part of the 30S ribosomal subunit. Contacts proteins S4 and S8.

Functionally, with S4 and S12 plays an important role in translational accuracy. Its function is as follows. Located at the back of the 30S subunit body where it stabilizes the conformation of the head with respect to the body. The chain is Small ribosomal subunit protein uS5 from Pseudomonas entomophila (strain L48).